A 156-amino-acid chain; its full sequence is Ribonuclease ageritin (156 aa).

The first 21 residues, 1–21 (MSESSTFTTAVVPEGEGVAPM), serve as a signal peptide directing secretion. His-98 is a catalytic residue. Residues Asn-100 and Asn-139 are each glycosylated (N-linked (GlcNAc...) asparagine).

This sequence belongs to the ribotoxin-like family. Monomer. Mg(2+) is required as a cofactor.

It localises to the vacuole lumen. The catalysed reaction is a 28S rRNA containing guanosine-adenosine pair + H2O = an [RNA fragment]-3'-adenosine-3'-phosphate + a 5'-a hydroxy-guanosine-3'-[RNA fragment].. Its activity is regulated as follows. In contrast to most ribotoxins, activity is completely inhibited by EDTA. Its function is as follows. Fungal ribonuclease involved in fungal defense. Highly specific and highly toxic fungal endonuclease that cleaves a single phosphodiester bond in the 28S RNA of eukaryotic ribosomes at a universally conserved GAGA tetraloop of the sarcin-ricin loop (SRL). The damage of the SRL inhibits the binding of translation elongation factors and halts protein biosynthesis, ultimately resulting in the death of the target cells. Shows antitumor activity. Exerts cytotoxicity and induces apoptosis towards rat glial cells and human glioma cells, and also displays some activity towards human neurolastoma cell lines. Shows a strong entomotoxicity against Aedes aegypti larvae, yet no nematotoxicity against nematodes. In Cyclocybe aegerita (Black poplar mushroom), this protein is Ribonuclease ageritin.